The chain runs to 543 residues: Chaperonin GroEL 1 (543 aa).

ATP is bound by residues 29–32 (TLGP), 86–90 (DGTTT), G413, 479–481 (NAA), and D495.

It belongs to the chaperonin (HSP60) family. Forms a cylinder of 14 subunits composed of two heptameric rings stacked back-to-back. Interacts with the co-chaperonin GroES.

The protein localises to the cytoplasm. It carries out the reaction ATP + H2O + a folded polypeptide = ADP + phosphate + an unfolded polypeptide.. In terms of biological role, together with its co-chaperonin GroES, plays an essential role in assisting protein folding. The GroEL-GroES system forms a nano-cage that allows encapsulation of the non-native substrate proteins and provides a physical environment optimized to promote and accelerate protein folding. The chain is Chaperonin GroEL 1 from Prochlorococcus marinus (strain NATL2A).